Here is a 343-residue protein sequence, read N- to C-terminus: SUMO-activating enzyme subunit aos-1 (343 aa).

The protein belongs to the ubiquitin-activating E1 family. Heterodimer of aos-1 and uba-2.

It participates in protein modification; protein sumoylation. Its function is as follows. The dimeric enzyme acts as an E1 ligase for smo-1. It mediates ATP-dependent activation of smo-1 and formation of a thioester with a conserved cysteine residue on uba-2. This chain is SUMO-activating enzyme subunit aos-1 (aos-1), found in Caenorhabditis elegans.